A 123-amino-acid polypeptide reads, in one-letter code: Cliotide T12 (123 aa).

Positions 1 to 28 (MASLRIAPLALFFFLAASVMFTVEKTEA) are cleaved as a signal peptide. A cross-link (cyclopeptide (Gly-Asp)) is located at residues 29–58 (GIPCGESCVFIPCITGAIGCSCKSKVCYRD). 3 disulfides stabilise this stretch: Cys32/Cys48, Cys36/Cys50, and Cys41/Cys55. Residues 59–123 (HVIAAEAKTM…KDHLKMSVPN (65 aa)) constitute a propeptide, removed in mature form.

In terms of processing, contains 3 disulfide bonds. Post-translationally, this is a cyclic peptide.

Its function is as follows. Probably participates in a plant defense mechanism. This is Cliotide T12 from Clitoria ternatea (Butterfly pea).